Consider the following 206-residue polypeptide: MPTLEGIDLTCIRGDRKLFSGVNFLLESGGLMQVQGPNGSGKTSLLRMLCGLASPAEGEIRWDGTQIRSLGGDYFGAMTYLGHLGGVKDDLTAIENLRISSALGGVDLDERKAHDALQHMGLGGRELLPAKVLSQGQRRRVTLARLLVCGTVLWILDEPLTALDTSAVKLVQGLIERHLEHGGMIVMTTHQEIEIAGAAIQRLQLT.

The ABC transporter domain maps to 4 to 205; the sequence is LEGIDLTCIR…AGAAIQRLQL (202 aa). 36 to 43 is an ATP binding site; it reads GPNGSGKT.

It belongs to the ABC transporter superfamily. CcmA exporter (TC 3.A.1.107) family. In terms of assembly, the complex is composed of two ATP-binding proteins (CcmA) and two transmembrane proteins (CcmB).

Its subcellular location is the cell inner membrane. It carries out the reaction heme b(in) + ATP + H2O = heme b(out) + ADP + phosphate + H(+). In terms of biological role, part of the ABC transporter complex CcmAB involved in the biogenesis of c-type cytochromes; once thought to export heme, this seems not to be the case, but its exact role is uncertain. Responsible for energy coupling to the transport system. The chain is Cytochrome c biogenesis ATP-binding export protein CcmA from Nitrosospira multiformis (strain ATCC 25196 / NCIMB 11849 / C 71).